We begin with the raw amino-acid sequence, 480 residues long: Ciliated left-right organizer protein containing ZP-N domains homolog (480 aa).

A signal peptide spans 1–23; the sequence is MKNQHNTFWVLCLLFVMFDETFS.

As to expression, expressed specifically by cells of the ciliated left-right organizer.

It is found in the secreted. This is Ciliated left-right organizer protein containing ZP-N domains homolog from Xenopus tropicalis (Western clawed frog).